Reading from the N-terminus, the 349-residue chain is Aspartate carbamoyltransferase catalytic subunit (349 aa).

2 residues coordinate carbamoyl phosphate: arginine 59 and threonine 60. An L-aspartate-binding site is contributed by lysine 87. Residues arginine 109, histidine 142, and glutamine 145 each coordinate carbamoyl phosphate. L-aspartate contacts are provided by arginine 182 and arginine 253. Residues glycine 294 and proline 295 each coordinate carbamoyl phosphate.

The protein belongs to the aspartate/ornithine carbamoyltransferase superfamily. ATCase family. In terms of assembly, heterododecamer (2C3:3R2) of six catalytic PyrB chains organized as two trimers (C3), and six regulatory PyrI chains organized as three dimers (R2).

The enzyme catalyses carbamoyl phosphate + L-aspartate = N-carbamoyl-L-aspartate + phosphate + H(+). Its pathway is pyrimidine metabolism; UMP biosynthesis via de novo pathway; (S)-dihydroorotate from bicarbonate: step 2/3. In terms of biological role, catalyzes the condensation of carbamoyl phosphate and aspartate to form carbamoyl aspartate and inorganic phosphate, the committed step in the de novo pyrimidine nucleotide biosynthesis pathway. The polypeptide is Aspartate carbamoyltransferase catalytic subunit (Synechococcus sp. (strain CC9902)).